The primary structure comprises 66 residues: Alpha-conotoxin GID (66 aa).

The signal sequence occupies residues 1–21 (MGMRMMFTVFLLVVLAATIVS). Residues 22 to 44 (FTSDRASDGRNVAAKAFHRIGRT) constitute a propeptide that is removed on maturation. The interval 45-48 (IRDE) is N-terminal tail important for activity on alpha-3-beta-2/CHRNA3-CHRNB2 and alpha-4-beta-2/CHRNA4-CHRNB2 nAChR. Glu-48 carries the 4-carboxyglutamate modification. 2 cysteine pairs are disulfide-bonded: Cys-49–Cys-55 and Cys-50–Cys-63. Residues 51–53 (SNP) form a ser-Xaa-Pro motif, crucial for potent interaction with nAChR region. A 4-hydroxyproline modification is found at Pro-60.

Belongs to the conotoxin A superfamily. In terms of processing, gamma-carboxyglutamation of Glu-48 seems to be not important for nAChR inhibition, since synthetic peptides without this modification do not show change in inhibition of alpha-7/CHRNA7 and alpha-3-beta-2/CHRNA3-CHRNB2 nAChR and show a 2.3-fold increase in inhibition of alpha-4-beta-2/CHRNA4-CHRNB2 nAChR. Hydroxylation of Pro-60 seems to be important for nAChR inhibition, since synthetic peptides without this modification show a small decrease in inhibition of alpha-7/CHRNA7 and alpha-3-beta-2/CHRNA3-CHRNB2 nAChR and a very important decrease in inhibition of alpha-4-beta-2/CHRNA4-CHRNB2 nAChR. Post-translationally, an amidation of Cys-63 increases potency against alpha-7/CHRNA7 (2.6-fold) and alpha-3-beta-2/CHRNA3-CHRNB2 (2-fold) nAChR. On the other hand, the peptide has no more activity on alpha-4-beta-2/CHRNA4-CHRNB2 nAChR with an amidated Cys-63. Expressed by the venom duct.

It is found in the secreted. Alpha-conotoxins act on postsynaptic membranes, they bind to the nicotinic acetylcholine receptors (nAChR) and thus inhibit them. This toxin reversibly blocks alpha-3-beta-2/CHRNA3-CHRNB2 (IC(50)=3.1-5.1 nM), alpha-7/CHRNA7 (IC(50)=4.5-5.1 nM), and alpha-4-beta-2/CHRNA4-CHRNB2 (IC(50)=128.6-390 nM) nAChRs. This chain is Alpha-conotoxin GID, found in Conus geographus (Geography cone).